Here is a 168-residue protein sequence, read N- to C-terminus: uncharacterized protein (168 aa).

The protein resides in the mitochondrion. This is an uncharacterized protein from Marchantia polymorpha (Common liverwort).